The following is a 471-amino-acid chain: Tumor necrosis factor receptor superfamily member 1A (471 aa).

The first 29 residues, 1–29 (MGLPTVPGLLLPLVLPALLADVYPAGVQG), serve as a signal peptide directing secretion. Residues 30 to 210 (LVPHPGDLEK…GKDSQDPGTT (181 aa)) are Extracellular-facing. 4 TNFR-Cys repeats span residues 43–82 (PCPQGKYNHPQNSTICCTKCHKGTYLYNDCPGPGRDTDCR), 83–125 (VCAP…DTVC), 126–166 (GCRK…DTIC), and 167–195 (HCHMGFFLKGAKCISCHDCKNKECEKLCP). Cystine bridges form between cysteine 44–cysteine 58, cysteine 59–cysteine 72, cysteine 62–cysteine 81, cysteine 84–cysteine 99, cysteine 102–cysteine 117, cysteine 105–cysteine 125, and cysteine 127–cysteine 143. A glycan (N-linked (GlcNAc...) asparagine) is linked at asparagine 54. Asparagine 145 and asparagine 151 each carry an N-linked (GlcNAc...) asparagine glycan. Cystine bridges form between cysteine 146–cysteine 158, cysteine 149–cysteine 166, cysteine 168–cysteine 179, cysteine 182–cysteine 194, and cysteine 185–cysteine 190. A helical transmembrane segment spans residues 211 to 233 (VLLPLVIVFGLCLASFASVVLAC). The Cytoplasmic segment spans residues 234-471 (RYQRWKPKLY…RLASEPRLLW (238 aa)). The N-SMase activation domain (NSD) stretch occupies residues 340 to 360 (TPGPPASTHLCTPVQKWEASA). Positions 372-457 (PATLYAVVDG…GCLENIEEAL (86 aa)) constitute a Death domain.

As to quaternary structure, binding of TNF to the extracellular domain leads to homotrimerization. The aggregated death domains provide a novel molecular interface that interacts specifically with the death domain of TRADD. Various TRADD-interacting proteins such as TRAFS, RIPK1 and possibly FADD, are recruited to the complex by their association with TRADD. This complex activates at least two distinct signaling cascades, apoptosis and NF-kappa-B signaling. Interacts with BAG4, BABAM2, FEM1B, GRB2, SQSTM1 and TRPC4AP. Interacts directly with NOL3 (via CARD domain); inhibits TNF-signaling pathway. Interacts with SH3RF2, TRADD and RIPK1. SH3RF2 facilitates the recruitment of RIPK1 and TRADD to TNFRSF1A in a TNF-alpha-dependent process. Interacts with PGLYRP1; this interaction is important for cell death induction. Interacts (via death domain) with MADD (via death domain).

Its subcellular location is the cell membrane. It localises to the golgi apparatus membrane. Receptor for TNFSF2/TNF-alpha and homotrimeric TNFSF1/lymphotoxin-alpha. The adapter molecule FADD recruits caspase-8 to the activated receptor. The resulting death-inducing signaling complex (DISC) performs caspase-8 proteolytic activation which initiates the subsequent cascade of caspases (aspartate-specific cysteine proteases) mediating apoptosis. The protein is Tumor necrosis factor receptor superfamily member 1A (TNFRSF1A) of Bos taurus (Bovine).